A 404-amino-acid chain; its full sequence is Floricaula/leafy-like protein FL1 (404 aa).

The disordered stretch occupies residues 210–251 (IGVPEHSSESDERKADTNKQKRRRSKEPGEDGEDRPREHPFI). Composition is skewed to basic and acidic residues over residues 215–228 (HSSESDERKADTNK) and 235–249 (KEPGEDGEDRPREHP). 3 consecutive DNA-binding regions follow at residues 246-250 (REHPF), 315-322 (NKPKMRHY), and 386-389 (YVPT).

Belongs to the FLO/LFY family. Expressed in both male and female cones, vegetative buds and needles, but not in the roots.

It is found in the nucleus. Functionally, probable transcription factor. The protein is Floricaula/leafy-like protein FL1 of Pinus radiata (Monterey pine).